We begin with the raw amino-acid sequence, 988 residues long: Next to BRCA1 gene 1 protein (988 aa).

A PB1 domain is found at 4-86; it reads QVTLNVTFKN…NQLQMQVHEG (83 aa). S117 carries the post-translational modification Phosphoserine. Positions 126–150 are disordered; that stretch reads MKTTEEPAPEQCSSAPCDTDQPQDK. The ZZ-type zinc-finger motif lies at 213-265; sequence SWHIACSHCQKRIVGVRYQCSLCPSYNICEDCEAGPYTHDTNHVLLKLRRPVV. C218, C221, C232, C235, C241, C244, H251, and H255 together coordinate Zn(2+). 2 ATG8 family proteins-binding regions span residues 543–637 and 745–756; these read ASER…PASV and ASSEDYIIILPE. T587 is modified (phosphothreonine). A phosphoserine mark is found at S591, S597, and S626. Residues 611–644 form a disordered region; the sequence is ESEGAGFKAPPDSTVSAKRKAETPASVEETEEDL. 2 disordered regions span residues 768-822 and 841-900; these read MYSS…TSQP and RSAP…HHNG. Residues 795-807 show a composition bias toward basic and acidic residues; it reads TEARERLPERESQ. Positions 808 to 822 are enriched in polar residues; sequence PQEQSISDILTTSQP. Position 860 is a phosphoserine (S860). Positions 935-979 constitute a UBA domain; that stretch reads SEDQTTALMAHLFEMGFCDRQLNLRLLRKHNYNILQVVTELLQVN.

As to quaternary structure, homooligomer and heterooligomer. Interacts with TRIM55. Interacts with titin/TTN. Interacts with RNF29, USP8, MAP1LC3A, MAP1LC3B, MAP1LC3C, GABARAP, GABARAPL1 and GABARAPL2. Binds to ubiquitin and ubiquitinated proteins. Interacts with SQSTM1. Interacts with TAX1BP1. Interacts with IRF3; this interaction mediates autophagic degradation of IRF3. Interacts with IL12A and IL12B. In terms of processing, phosphorylated by GSK3A; this phosphorylation inhibits NBR1 involvement in the formation of ubiquitinated protein aggregates. Expressed in brain.

It is found in the cytoplasm. Its subcellular location is the cytoplasmic vesicle. It localises to the autophagosome. The protein localises to the lysosome. The protein resides in the myofibril. It is found in the sarcomere. Its subcellular location is the m line. Functionally, ubiquitin-binding autophagy adapter that participates in different processes including host defense or intracellular homeostasis. Possesses a double function during the selective autophagy by acting as a shuttle bringing ubiquitinated proteins to autophagosomes and also by participating in the formation of protein aggregates. Plays a role in the regulation of the innate immune response by modulating type I interferon production and targeting ubiquitinated IRF3 for autophagic degradation. In response to oxidative stress, promotes an increase in SQSTM1 levels, phosphorylation, and body formation by preventing its autophagic degradation. In turn, activates the KEAP1-NRF2/NFE2L2 antioxidant pathway. Also plays non-autophagy role by mediating the shuttle of IL-12 to late endosome for subsequent secretion. In Mus musculus (Mouse), this protein is Next to BRCA1 gene 1 protein (Nbr1).